We begin with the raw amino-acid sequence, 325 residues long: Urease accessory protein UreD (325 aa).

Belongs to the UreD family. As to quaternary structure, ureD, UreF and UreG form a complex that acts as a GTP-hydrolysis-dependent molecular chaperone, activating the urease apoprotein by helping to assemble the nickel containing metallocenter of UreC. The UreE protein probably delivers the nickel.

It is found in the cytoplasm. In terms of biological role, required for maturation of urease via the functional incorporation of the urease nickel metallocenter. Its function is as follows. Expression of the urease operon increases the likelihood of bacterial survival by contributing to acid resistance in vitro and in vivo in BALB/c mice. Y.enterocolitica enters the body via an oral path and must survive the acidic stomach before being able to colonize the intestinal mucosa. This Yersinia enterocolitica protein is Urease accessory protein UreD.